A 360-amino-acid polypeptide reads, in one-letter code: SPRY domain-containing SOCS box protein 3 (360 aa).

Positions Asp21 to Leu54 are disordered. A B30.2/SPRY domain is found at Ser84 to Arg274. The SOCS box domain maps to Ser264–Trp315. The segment at Asn322 to Asp350 is disordered. The span at Ser332–Thr346 shows a compositional bias: polar residues.

This sequence belongs to the SPSB family. Substrate-recognition component of the ECS(SPSB3) complex, composed of spsb3, cul5, elob, elob and rnf7/rbx2.

Its subcellular location is the nucleus. It functions in the pathway protein modification; protein ubiquitination. Functionally, substrate-recognition component of a cullin-5-RING E3 ubiquitin-protein ligase complex (ECS complex, also named CRL5 complex), which mediates the ubiquitination and subsequent proteasomal degradation of target proteins. The chain is SPRY domain-containing SOCS box protein 3 (spsb3) from Xenopus laevis (African clawed frog).